A 215-amino-acid chain; its full sequence is UPF0502 protein YceH (215 aa).

Lys80 bears the N6-acetyllysine mark.

Belongs to the UPF0502 family.

This chain is UPF0502 protein YceH, found in Escherichia fergusonii (strain ATCC 35469 / DSM 13698 / CCUG 18766 / IAM 14443 / JCM 21226 / LMG 7866 / NBRC 102419 / NCTC 12128 / CDC 0568-73).